The chain runs to 283 residues: MNEKIAVVTDSTTYLPDEVKEQLRINVVPLSVIIDGKSYREGEELSATDFYRKVKEAENFPTSSQPAPGEFIHLFENLKEQGFDTVISIHLSSGISGTFQNAASAGELIEGLNVVAYDSELSCMAQGMFAVKAAEMALANEPLDQIIQKLDKIKQAQDAYFMVDDLNNLQRGGRLNGAQALVGSLLQIKPILHFNDKQIVLFEKVRTQKKALKRIEDILQKAVQNKTAEKAYVIHGNDLAKGEAWLAQLEAKFPEVTFELSYFGPVIGTHLGEGALGLTWSIK.

Residues 5–282 enclose the DegV domain; the sequence is IAVVTDSTTY…EGALGLTWSI (278 aa). 2 residues coordinate hexadecanoate: Ser63 and Ser96.

Its function is as follows. May bind long-chain fatty acids, such as palmitate, and may play a role in lipid transport or fatty acid metabolism. The sequence is that of DegV domain-containing protein lmo2514 from Listeria monocytogenes serovar 1/2a (strain ATCC BAA-679 / EGD-e).